The chain runs to 89 residues: Large ribosomal subunit protein bL27 (89 aa).

The protein belongs to the bacterial ribosomal protein bL27 family.

The chain is Large ribosomal subunit protein bL27 from Bacteroides thetaiotaomicron (strain ATCC 29148 / DSM 2079 / JCM 5827 / CCUG 10774 / NCTC 10582 / VPI-5482 / E50).